Here is a 613-residue protein sequence, read N- to C-terminus: Secretogranin-2 (613 aa).

The first 27 residues, 1–27, serve as a signal peptide directing secretion; it reads MAEAKTHWLGAVLSLIPLIFLLSEAEA. A propeptide spanning residues 28–30 is cleaved from the precursor; it reads ASF. 2 disordered regions span residues 67-105 and 119-146; these read QQAH…DSLS and QAEN…PMDM. A compositionally biased stretch (basic and acidic residues) spans 92 to 105; it reads ENGDLPESSRDSLS. The residue at position 150 (tyrosine 150) is a Sulfotyrosine. Residues serine 173, serine 267, serine 428, serine 528, serine 551, and serine 552 each carry the phosphoserine modification. A compositionally biased stretch (basic and acidic residues) spans 257-283; it reads ESQTQEEVRDSKENADKTEQINDEMKR. The disordered stretch occupies residues 257 to 287; sequence ESQTQEEVRDSKENADKTEQINDEMKRSGQL. Residues 546–557 are compositionally biased toward basic and acidic residues; it reads HLSQHSSQETDK. The interval 546 to 580 is disordered; it reads HLSQHSSQETDKLASVSKRLPVGTPKSDDTPNRPY.

It belongs to the chromogranin/secretogranin protein family. As to quaternary structure, interacts with Secretogranin III/SCG3. Highest levels detected in anterior pituitary followed by adrenal medulla and posterior pituitary (at protein level). In the brain, high levels are found in the hypothalamus, comparable to those present in posterior pituitary with two- to six-fold lower levels present in the other brain regions investigated including caudate nucleus, hippocampus, thalamus and brainstem (at protein level).

It is found in the secreted. Neuroendocrine protein of the granin family that regulates the biogenesis of secretory granules. This chain is Secretogranin-2 (SCG2), found in Bos taurus (Bovine).